Here is a 30-residue protein sequence, read N- to C-terminus: ATP-dependent Clp protease ATP-binding subunit ClpA homolog (30 aa).

The protein belongs to the ClpA/ClpB family.

It localises to the plastid. It is found in the chloroplast. Functionally, may interact with a ClpP-like protease involved in degradation of denatured proteins in the chloroplast. The chain is ATP-dependent Clp protease ATP-binding subunit ClpA homolog from Pinus pinaster (Maritime pine).